Here is a 37-residue protein sequence, read N- to C-terminus: Omega/M-ectatotoxin-Et1a subunit A (37 aa).

Cys12 and Cys34 form a disulfide bridge.

Belongs to the ectatomin family. Ectatomin-Et subfamily. Heterodimer of an A and a B chain; disulfide-linked. Expressed by the venom gland.

It localises to the secreted. Its subcellular location is the target cell membrane. Functionally, algogenic for animals, human and insects. At high concentrations (0.5-1 uM), it acts as a pore-forming protein that forms nonselective cation channels both in cell and artificial membranes. It is weakly selective for cation over anions channel conductance is identical in both directions. At lower concentrations (1-10 nM), this heterodimer inhibits cardiac L-type calcium currents in isolated rat cardiac ventricular myocytes. The polypeptide is Omega/M-ectatotoxin-Et1a subunit A (Ectatomma tuberculatum (Selva ant)).